Here is a 51-residue protein sequence, read N- to C-terminus: Ribosome biogenesis protein Nop10 (51 aa).

This sequence belongs to the NOP10 family.

Functionally, involved in ribosome biogenesis; more specifically in 18S rRNA pseudouridylation and in cleavage of pre-rRNA. The sequence is that of Ribosome biogenesis protein Nop10 from Methanococcus maripaludis (strain C5 / ATCC BAA-1333).